A 655-amino-acid polypeptide reads, in one-letter code: Ribonuclease 3 (655 aa).

Disordered regions lie at residues 1–148 (MENL…NSEK) and 171–376 (LIAP…NIPL). A unknown region spans residues 1-400 (MENLEKNTKK…NYIKDNYPVI (400 aa)). Basic residues predominate over residues 8 to 20 (TKKKIKKPNNFKK). 2 stretches are compositionally biased toward basic and acidic residues: residues 21–34 (NNKD…DKPT) and 69–89 (DYEK…RSDE). Residues 92 to 102 (NNNSKKQNNNK) are compositionally biased toward low complexity. Residues 103 to 115 (QAKKKANKNKKQK) show a composition bias toward basic residues. Positions 135 to 148 (AANNQVKAIPNSEK) are enriched in polar residues. The segment covering 206–223 (NNFVNNQKNHNKNNAGNK) has biased composition (low complexity). Polar residues-rich tracts occupy residues 229-242 (PTKP…SKST) and 250-259 (PNFTSNQPKP). Basic and acidic residues-rich tracts occupy residues 260–274 (TQKE…KKAE) and 298–309 (DQTKKKQPKENK). Low complexity predominate over residues 310 to 332 (NQQIKAVNLNNNQQKTNNNNQKN). Residues 333 to 350 (SVDKSENDNNKKKSEANQ) show a composition bias toward basic and acidic residues. The span at 351-360 (KQENLNPNNN) shows a compositional bias: low complexity. The tract at residues 401–655 (YADLKEKNRL…KFRGLLKLEK (255 aa)) is RNase 3. One can recognise an RNase III domain in the interval 432–556 (LELLLKKFKV…FIGAMYLDQG (125 aa)). Glu-472 contacts Mg(2+). Asp-476 is a catalytic residue. Positions 542 and 545 each coordinate Mg(2+). Residue Glu-545 is part of the active site. Positions 582 to 649 (DYKSIFQEII…AKEAISKFRG (68 aa)) constitute a DRBM domain.

It belongs to the ribonuclease III family. As to quaternary structure, homodimer. Mg(2+) is required as a cofactor.

The protein localises to the cytoplasm. It catalyses the reaction Endonucleolytic cleavage to 5'-phosphomonoester.. Digests double-stranded RNA. Involved in the processing of primary rRNA transcript to yield the immediate precursors to the large and small rRNAs (23S and 16S). Processes some mRNAs, and tRNAs when they are encoded in the rRNA operon. Processes pre-crRNA and tracrRNA of type II CRISPR loci if present in the organism. The chain is Ribonuclease 3 (rnc) from Mycoplasmoides gallisepticum (strain R(low / passage 15 / clone 2)) (Mycoplasma gallisepticum).